Reading from the N-terminus, the 111-residue chain is Large ribosomal subunit protein eL31 (111 aa).

The protein belongs to the eukaryotic ribosomal protein eL31 family.

This is Large ribosomal subunit protein eL31 (rpl31) from Dictyostelium discoideum (Social amoeba).